The sequence spans 223 residues: Gastrula zinc finger protein XlCGF52.1 (223 aa).

8 consecutive C2H2-type zinc fingers follow at residues 6–27, 33–55, 61–83, 89–111, 117–139, 145–167, 173–195, and 201–223; these read FTCPECGKRFSQKSNCWHTEDH, FTCMECSKSFTVKSSLLSHQRVH, YTCTQCNKQFSHSAQLRAHISTH, FPCTECSKTFSLKHKLYKHQRIH, FQCLECGKSFSVKHGLLKHQRSH, YACSECQKTFAHKTTLMVHERIH, YECNDCGKRFIHSTNLNCHQKIH, and FTCTECGKSFSLKNKLVRHQKIH.

It belongs to the krueppel C2H2-type zinc-finger protein family.

Its subcellular location is the nucleus. Its function is as follows. May be involved in transcriptional regulation. This is Gastrula zinc finger protein XlCGF52.1 from Xenopus laevis (African clawed frog).